A 587-amino-acid polypeptide reads, in one-letter code: MFS-type transporter opaD (587 aa).

The next 9 helical transmembrane spans lie at 87-107 (VAIM…NTIL), 124-146 (MGWY…GKLL), 153-173 (WVYI…GVSP), 184-204 (ISGT…TIIV), 214-234 (GILS…GGAF), 242-262 (WCFY…LLLF), 284-304 (IIGL…LQWG), 315-335 (IIAL…VEYW), and 357-377 (LFTF…PIWF). An N-linked (GlcNAc...) asparagine glycan is attached at Asn-382. Transmembrane regions (helical) follow at residues 393-413 (IPLI…VTTL), 414-434 (GYYI…AGLL), 447-467 (IGFQ…PLVV), 483-503 (LVTL…QSVF), and 554-574 (VYLV…PIRW).

Belongs to the major facilitator superfamily. TCR/Tet family.

The protein localises to the membrane. MFS-type transporter; part of the gene cluster that mediates the biosynthesis of oxepinamides, derivatives of anthranilyl-containing tripeptides that share an oxepin ring and a fused pyrimidinone moiety. The polypeptide is MFS-type transporter opaD (Aspergillus ustus).